Consider the following 399-residue polypeptide: Glycerate 2-kinase (399 aa).

Position 48 (Lys-48) interacts with substrate.

Belongs to the glycerate kinase type-1 family. Homodimer. The cofactor is Mg(2+). Ni(2+) serves as cofactor. Mn(2+) is required as a cofactor. Requires Co(2+) as cofactor. It depends on Ca(2+) as a cofactor. The cofactor is Zn(2+). Sr(2+) serves as cofactor.

It catalyses the reaction (R)-glycerate + ATP = (2R)-2-phosphoglycerate + ADP + H(+). Its function is as follows. Catalyzes the ATP-dependent phosphorylation of D-glycerate to 2-phosphoglycerate. It can also utilize GTP, CTP, UTP, ADP, AMP or pyrophosphate as phosphate donor. The chain is Glycerate 2-kinase (gck) from Sulfurisphaera tokodaii (strain DSM 16993 / JCM 10545 / NBRC 100140 / 7) (Sulfolobus tokodaii).